Here is a 112-residue protein sequence, read N- to C-terminus: Putative pterin-4-alpha-carbinolamine dehydratase (112 aa).

Positions 1 to 30 (MSDELQSRTCTPCRGDVPPMTKAEAKRQLA) are disordered.

This sequence belongs to the pterin-4-alpha-carbinolamine dehydratase family.

It carries out the reaction (4aS,6R)-4a-hydroxy-L-erythro-5,6,7,8-tetrahydrobiopterin = (6R)-L-erythro-6,7-dihydrobiopterin + H2O. This chain is Putative pterin-4-alpha-carbinolamine dehydratase, found in Aromatoleum aromaticum (strain DSM 19018 / LMG 30748 / EbN1) (Azoarcus sp. (strain EbN1)).